The chain runs to 585 residues: Putative phospholipase B-like 2 (585 aa).

Residues 1 to 35 (MAAPMDRTHGGRAARALRRALALASLAGLLLSGLA) form the signal peptide. Asn84, Asn102, and Asn106 each carry an N-linked (GlcNAc...) asparagine glycan. The cysteines at positions 138 and 148 are disulfide-linked. 2 N-linked (GlcNAc...) asparagine glycosylation sites follow: Asn227 and Asn432. Cys488 and Cys491 are joined by a disulfide. N-linked (GlcNAc...) asparagine glycosylation is present at Asn511.

It belongs to the phospholipase B-like family. In terms of assembly, interacts with IGF2R. Post-translationally, glycosylated; contains mannose 6-phosphate sugars.

It is found in the lysosome lumen. Putative phospholipase. The chain is Putative phospholipase B-like 2 (Plbd2) from Rattus norvegicus (Rat).